Reading from the N-terminus, the 392-residue chain is Small ribosomal subunit protein bS1 (392 aa).

4 consecutive S1 motif domains span residues 16–90 (GDKV…LSKR), 108–173 (DEII…LSRK), 194–262 (GDVI…LSIK), and 279–348 (DDVI…LSIK).

Belongs to the bacterial ribosomal protein bS1 family.

Functionally, binds mRNA; thus facilitating recognition of the initiation point. It is needed to translate mRNA with a short Shine-Dalgarno (SD) purine-rich sequence. This chain is Small ribosomal subunit protein bS1 (rpsA), found in Staphylococcus haemolyticus (strain JCSC1435).